The following is a 162-amino-acid chain: B-box zinc finger protein 23 (162 aa).

The Zn(2+) site is built by Cys5, Cys8, Cys28, His33, Cys63, Cys66, Cys86, and His91. A B box-type 1; atypical zinc finger spans residues 5-47 (CEVCEKAEAEVLCCSDEAVLCKPCDIKVHEANKLFQRHHRVAL). A B box-type 2; atypical zinc finger spans residues 63 to 101 (CDICQERKGYFFCLEDRAMLCNDCDEAIHTCNSHQRFLL). Residues 137-162 (QYSSEETEAGNSGEIVHKNPSVILSP) form a disordered region.

Its subcellular location is the nucleus. Functionally, probable transcription factor that may be involved in seedling photomorphogenesis. The chain is B-box zinc finger protein 23 from Arabidopsis thaliana (Mouse-ear cress).